Here is an 875-residue protein sequence, read N- to C-terminus: ATP-dependent helicase Lhr-Core (875 aa).

ATP-binding residues include glutamine 35, lysine 58, threonine 59, aspartate 173, glutamate 174, isoleucine 355, arginine 372, and histidine 375. Residues 39–230 (IPLIKQNYNV…FLVGKDREYR (192 aa)) enclose the Helicase ATP-binding domain. The DEIH box motif lies at 173–176 (DEIH). The Helicase C-terminal domain occupies 247 to 419 (PVKDLVHSSE…SIHIPKNPLD (173 aa)). The WH domain stretch occupies residues 420–506 (VLSQIIVSAS…IFYTNSGTIP (87 aa)). Residues 507–875 (DEAMISVVTE…VNIELEYTSV (369 aa)) are domain 4.

Belongs to the Lhr helicase family. Lhr-Core subfamily. In terms of assembly, monomer and homodimer. The monomeric form has helicase, ATPase and strand annealing activities, while the dimeric form only has ATPAse and strand annealing activities. Interacts with DNA topoisomerase 3 (topA).

The catalysed reaction is Couples ATP hydrolysis with the unwinding of duplex DNA by translocating in the 3'-5' direction.. It carries out the reaction ATP + H2O = ADP + phosphate + H(+). With respect to regulation, DNA topoisomerase 3 (topA) inhibits helicase activity on Holliday junctions (HJ) but has no effect on ATPase activity. Its function is as follows. DNA helicase that translocates in a 3'-5' direction on single-stranded (ss)DNA, probably involved in DNA repair. Unwinds DNA in a 3'-5' direction, unwinding is ATP-dependent, acts preferentially on fork and 3'-tailed DNA; bubble and blunt-ended double-stranded (ds)DNA are not substrates. Has winding and unwinding activity, unwinds Holliday junction (HJ) DNA in the presence of ATP, the main product is forked DNA, single-stranded binding protein (SSB) does not stimulate activity. Anneals complementary oligonucleotides in an ATP-independent manner to form HJ and fork structures, thus can perform strand exchange. Preferentially binds HJ, forked and ssDNA, dsDNA is bound less well. LhrC-Core (Hel112) inhibits the exonuclease activity of the HerA-NurA complex on ss- and dsDNA, has no effect on ssDNA nicking by NurA; HerA-NurA are involved in DNA end-resection during DNA double-strand break repair. The sequence is that of ATP-dependent helicase Lhr-Core from Saccharolobus solfataricus (strain ATCC 35092 / DSM 1617 / JCM 11322 / P2) (Sulfolobus solfataricus).